The chain runs to 422 residues: UDP-N-acetylglucosamine 1-carboxyvinyltransferase (422 aa).

22–23 (KN) contacts phosphoenolpyruvate. R92 is a binding site for UDP-N-acetyl-alpha-D-glucosamine. The active-site Proton donor is the C116. C116 carries the post-translational modification 2-(S-cysteinyl)pyruvic acid O-phosphothioketal. UDP-N-acetyl-alpha-D-glucosamine contacts are provided by residues 121-125 (RPVDQ), D307, and I329.

It belongs to the EPSP synthase family. MurA subfamily.

It is found in the cytoplasm. The enzyme catalyses phosphoenolpyruvate + UDP-N-acetyl-alpha-D-glucosamine = UDP-N-acetyl-3-O-(1-carboxyvinyl)-alpha-D-glucosamine + phosphate. It participates in cell wall biogenesis; peptidoglycan biosynthesis. In terms of biological role, cell wall formation. Adds enolpyruvyl to UDP-N-acetylglucosamine. In Psychrobacter arcticus (strain DSM 17307 / VKM B-2377 / 273-4), this protein is UDP-N-acetylglucosamine 1-carboxyvinyltransferase.